The primary structure comprises 2551 residues: Piezo-type mechanosensitive ion channel component (2551 aa).

The next 8 helical transmembrane spans lie at 5-25 (YACM…AALM), 27-47 (PVGI…VPLA), 56-76 (VTAF…GHIT), 106-126 (FIDL…LVFA), 204-226 (IHFE…FAAV), 231-250 (VPGG…WATC), 256-276 (GFAL…LSIV), and 320-340 (LSLD…ALAL). The disordered stretch occupies residues 354–375 (STRKARTPQPLESGSSVAPSVT). Polar residues predominate over residues 363 to 375 (PLESGSSVAPSVT). The next 9 helical transmembrane spans lie at 395–415 (TTTS…GFIY), 424–444 (ILMM…LLLS), 463–483 (PFIV…GMDL), 516–536 (VPLI…RQFF), 548–568 (LADF…SYLI), 588–608 (LLVR…AITG), 611–631 (MTGF…VFQS), 639–659 (IMYG…ILIY), and 695–715 (FLHL…VHYF). A compositionally biased stretch (polar residues) spans 731-741 (GSAQQKPTETT). Residues 731 to 772 (GSAQQKPTETTALEPAPSKRRGSAGSLRKSQGPSAEAAPGAT) are disordered. The next 12 membrane-spanning stretches (helical) occupy residues 819 to 839 (IAAF…FVGF), 857 to 877 (LISF…IEYL), 910 to 930 (LMSL…HAVI), 973 to 993 (LNFG…VSTI), 994 to 1014 (TYRQ…LLLL), 1022 to 1042 (IWGV…IVLV), 1071 to 1091 (GALH…LVIL), 1152 to 1172 (VLCG…TNIA), 1174 to 1194 (LLAL…SDFY), 1198 to 1218 (IHTI…NILI), 1239 to 1259 (WLVH…QIML), and 1275 to 1295 (ITHQ…IFQL). Disordered regions lie at residues 1426 to 1521 (NITE…AKDS) and 1592 to 1658 (ESDE…PQQQ). Residues 1430–1448 (SEMKMQRRKTLYDKSKDAP) are compositionally biased toward basic and acidic residues. Residues 1466 to 1477 (ATASSSASPAPT) show a composition bias toward low complexity. Basic and acidic residues predominate over residues 1497–1511 (QTSKETSDSKSKMEV). 2 stretches are compositionally biased toward low complexity: residues 1621 to 1634 (PTST…TTTP) and 1644 to 1658 (LQPL…PQQQ). 4 helical membrane passes run 1718–1738 (ISSW…VVFI), 1741–1761 (VVNA…WGTL), 1770–1790 (FWVT…IFQF), and 1817–1837 (AHYA…RYLL). The interval 1854–1876 (FTKPTASIDERDDSDNLSQPDSR) is disordered. 7 consecutive transmembrane segments (helical) span residues 1937–1957 (ALMF…FTAF), 1979–1999 (IPFL…RALY), 2008–2028 (IIFH…VVPA), 2033–2053 (TFNS…YMLL), 2075–2095 (FSMV…LYEL), 2151–2171 (IMGG…LCLF), and 2431–2451 (TFSF…VLLA). The tract at residues 2522-2551 (EYVDDDGDTDSIPSRMSVRRPEQLQPQQPQ) is disordered.

It belongs to the PIEZO (TC 1.A.75) family.

It localises to the cell membrane. Functionally, component of a mechanosensitive channel required for rapidly adapting mechanically activated (MA) currents. Plays a major role in nociception (response to strong or painful touch). Required for maintaining the mechanosensitivity of tarsal bristle mechanosensors. During their evalulation of potential egg-laying sites, females determine the softest substrate for their eggs first by making a coarse evaluation of substrate hardness using mechanosensitive channels nan and Piezo in the leg tarsal bristles, followed by a much finer assessment using nan, iav and Tmc mechanosensitive channels on the labellum. Acts in the nompC- and nan-expressing neurons of the female leg tarsals, to sense the mild differences in egg-laying substrate stiffness. The chain is Piezo-type mechanosensitive ion channel component from Drosophila melanogaster (Fruit fly).